Here is a 334-residue protein sequence, read N- to C-terminus: Serine racemase (334 aa).

A Mg(2+)-binding site is contributed by Glu-13. ATP is bound by residues Ser-31, Ser-32, Ile-33, Lys-51, and Thr-52. Active-site proton acceptor residues include Lys-56 and Ser-84. The residue at position 56 (Lys-56) is an N6-(pyridoxal phosphate)lysine. Asn-86 is a pyridoxal 5'-phosphate binding site. Gln-89 contacts ATP. Cys-113 is subject to S-nitrosocysteine. ATP is bound at residue Tyr-121. Asn-154 lines the pyridoxal 5'-phosphate pocket. Asp-178 contributes to the Mg(2+) binding site. 5 residues coordinate pyridoxal 5'-phosphate: Gly-185, Gly-186, Gly-187, Gly-188, and Met-189. Residues Glu-210, Ala-214, Asp-216, and Asn-247 each coordinate Mg(2+). Ca(2+)-binding residues include Glu-210, Ala-214, Asp-216, and Asn-247. Mn(2+) is bound by residues Glu-210, Ala-214, and Asp-216. ATP is bound at residue Lys-279. Ser-313 is a binding site for pyridoxal 5'-phosphate. Asn-316 contributes to the ATP binding site.

The protein belongs to the serine/threonine dehydratase family. In terms of assembly, homodimer. Requires Mg(2+) as cofactor. It depends on Mn(2+) as a cofactor. Ca(2+) is required as a cofactor. Pyridoxal 5'-phosphate serves as cofactor. S-nitrosylated, leading to decrease the enzyme activity.

The enzyme catalyses L-serine = D-serine. It catalyses the reaction L-serine = pyruvate + NH4(+). It carries out the reaction D-serine = pyruvate + NH4(+). Its function is as follows. Catalyzes the synthesis of D-serine from L-serine. D-serine is a key coagonist with glutamate at NMDA receptors. Has dehydratase activity towards both L-serine and D-serine. This chain is Serine racemase (SRR), found in Bos taurus (Bovine).